We begin with the raw amino-acid sequence, 132 residues long: ATP synthase epsilon chain, chloroplastic (132 aa).

Belongs to the ATPase epsilon chain family. In terms of assembly, F-type ATPases have 2 components, CF(1) - the catalytic core - and CF(0) - the membrane proton channel. CF(1) has five subunits: alpha(3), beta(3), gamma(1), delta(1), epsilon(1). CF(0) has three main subunits: a, b and c.

Its subcellular location is the plastid. The protein localises to the chloroplast thylakoid membrane. Its function is as follows. Produces ATP from ADP in the presence of a proton gradient across the membrane. This Coffea arabica (Arabian coffee) protein is ATP synthase epsilon chain, chloroplastic.